The sequence spans 91 residues: Acylphosphatase (91 aa).

Residues 6 to 91 form the Acylphosphatase-like domain; that stretch reads CMRCYISGRV…WEDYISFDVL (86 aa). Residues R21 and N39 contribute to the active site.

This sequence belongs to the acylphosphatase family.

The enzyme catalyses an acyl phosphate + H2O = a carboxylate + phosphate + H(+). This is Acylphosphatase (acyP) from Legionella pneumophila subsp. pneumophila (strain Philadelphia 1 / ATCC 33152 / DSM 7513).